A 622-amino-acid polypeptide reads, in one-letter code: Matrilin-4 (622 aa).

Residues 1-18 form the signal peptide; it reads MRGLLCWPVLLLLLQPWE. Positions 34–213 constitute a VWFA 1 domain; sequence DLVFVIDSSR…EFGLQFQSRL (180 aa). A glycan (N-linked (GlcNAc...) asparagine) is linked at Asn-69. In terms of domain architecture, EGF-like 1; incomplete spans 215–255; the sequence is GKDQCAEGGHGCQHQCVNAWAMFHCTCNPGYKLAADNKSCL. 12 disulfide bridges follow: Cys-219–Cys-230, Cys-226–Cys-239, Cys-241–Cys-254, Cys-260–Cys-271, Cys-267–Cys-280, Cys-282–Cys-295, Cys-301–Cys-312, Cys-308–Cys-321, Cys-323–Cys-336, Cys-342–Cys-353, Cys-349–Cys-362, and Cys-364–Cys-377. Asn-251 is a glycosylation site (N-linked (GlcNAc...) asparagine). EGF-like domains are found at residues 256-292, 297-337, and 342-377; these read AIDLCAEGTHGCEHHCVNSPGSYFCHCQVGFVLQQDQ, AIDY…RSCQ, and CNGVDHGCEFQCVSEGLSYRCLCPEGRQLQADGKSC. Asn-305 carries N-linked (GlcNAc...) asparagine glycosylation. The 176-residue stretch at 386 to 561 folds into the VWFA 2 domain; the sequence is DLVLLVDGSK…GTMTHLLENL (176 aa). The stretch at 591–622 forms a coiled coil; sequence GRTLGALESLTLNLAQLTARLEDLENQLANQK.

As to quaternary structure, interacts with COMP. In terms of tissue distribution, embryonic kidney, lung and placenta.

Its subcellular location is the secreted. Functionally, major component of the extracellular matrix of cartilage. The polypeptide is Matrilin-4 (MATN4) (Homo sapiens (Human)).